A 329-amino-acid polypeptide reads, in one-letter code: Putative helicase 109L (329 aa).

The 155-residue stretch at 105 to 259 folds into the Helicase ATP-binding domain; that stretch reads LTLLTQHKSC…LFDMFFGPEM (155 aa). 118-125 contacts ATP; the sequence is CYTGFGKT. A DEAH box motif is present at residues 212–215; it reads DEAH.

This sequence belongs to the DEAD box helicase family. DEAH subfamily.

This is Putative helicase 109L from Invertebrate iridescent virus 3 (IIV-3).